The chain runs to 76 residues: Omega-scoloptoxin(13)-Ssm2b (76 aa).

An N-terminal signal peptide occupies residues 1-22 (MAYIYALIFAIVVCMNTDVIQA).

The protein belongs to the scoloptoxin-13 family. Post-translationally, contains 3 disulfide bonds. Expressed by the venom gland.

The protein resides in the secreted. Functionally, inhibits voltage-gated calcium channel (Cav) currents. The protein is Omega-scoloptoxin(13)-Ssm2b of Scolopendra mutilans (Chinese red-headed centipede).